The following is a 178-amino-acid chain: MTQISAKDVPGMGRRQFMNLLTFGSVTGVALGALYPVVNYFIPPKASGAGGGTTAKDELGNDVTASGWLADHKEGDRSLVQGLKGDPTYLIVDGPDSIGDYGINAICTHLGCVVPWNAGANKFMCPCHGSQYDATGKVVRGPAPLSLALAHVNVENDNVFVSQWSETDFRTDEKPWWA.

A helical membrane pass occupies residues 20–42 (LLTFGSVTGVALGALYPVVNYFI). In terms of domain architecture, Rieske spans 65–161 (ASGWLADHKE…VNVENDNVFV (97 aa)). Cysteine 107, histidine 109, cysteine 125, and histidine 128 together coordinate [2Fe-2S] cluster. Cysteine 112 and cysteine 127 are oxidised to a cystine.

It belongs to the Rieske iron-sulfur protein family. As to quaternary structure, the 4 large subunits of the cytochrome b6-f complex are cytochrome b6, subunit IV (17 kDa polypeptide, PetD), cytochrome f and the Rieske protein, while the 4 small subunits are PetG, PetL, PetM and PetN. The complex functions as a dimer. The cofactor is [2Fe-2S] cluster.

It localises to the cellular thylakoid membrane. The catalysed reaction is 2 oxidized [plastocyanin] + a plastoquinol + 2 H(+)(in) = 2 reduced [plastocyanin] + a plastoquinone + 4 H(+)(out). In terms of biological role, component of the cytochrome b6-f complex, which mediates electron transfer between photosystem II (PSII) and photosystem I (PSI), cyclic electron flow around PSI, and state transitions. This is Cytochrome b6-f complex iron-sulfur subunit from Synechococcus sp. (strain RCC307).